The chain runs to 247 residues: Probable transcriptional regulatory protein GAU_0635 (247 aa).

Belongs to the TACO1 family.

Its subcellular location is the cytoplasm. The protein is Probable transcriptional regulatory protein GAU_0635 of Gemmatimonas aurantiaca (strain DSM 14586 / JCM 11422 / NBRC 100505 / T-27).